The following is a 79-amino-acid chain: Acyl carrier protein (79 aa).

Positions 1-76 (MEVFEEVRDV…DVVTYIENLN (76 aa)) constitute a Carrier domain. At Ser-36 the chain carries O-(pantetheine 4'-phosphoryl)serine.

The protein belongs to the acyl carrier protein (ACP) family. 4'-phosphopantetheine is transferred from CoA to a specific serine of apo-ACP by AcpS. This modification is essential for activity because fatty acids are bound in thioester linkage to the sulfhydryl of the prosthetic group.

Its subcellular location is the cytoplasm. The protein operates within lipid metabolism; fatty acid biosynthesis. Its function is as follows. Carrier of the growing fatty acid chain in fatty acid biosynthesis. The polypeptide is Acyl carrier protein (Campylobacter hominis (strain ATCC BAA-381 / DSM 21671 / CCUG 45161 / LMG 19568 / NCTC 13146 / CH001A)).